Consider the following 853-residue polypeptide: Leucine--tRNA ligase (853 aa).

The 'HIGH' region motif lies at 40 to 50 (PYPSGKMHMGH). The short motif at 609–613 (KMSKS) is the 'KMSKS' region element. Lys-612 contacts ATP.

This sequence belongs to the class-I aminoacyl-tRNA synthetase family.

It localises to the cytoplasm. It catalyses the reaction tRNA(Leu) + L-leucine + ATP = L-leucyl-tRNA(Leu) + AMP + diphosphate. The sequence is that of Leucine--tRNA ligase from Brachyspira hyodysenteriae (strain ATCC 49526 / WA1).